The primary structure comprises 153 residues: Cell division protein SepF (153 aa).

The protein belongs to the SepF family. As to quaternary structure, homodimer. Interacts with FtsZ.

Its subcellular location is the cytoplasm. In terms of biological role, cell division protein that is part of the divisome complex and is recruited early to the Z-ring. Probably stimulates Z-ring formation, perhaps through the cross-linking of FtsZ protofilaments. Its function overlaps with FtsA. The polypeptide is Cell division protein SepF (Clostridium novyi (strain NT)).